A 373-amino-acid polypeptide reads, in one-letter code: Ribosomal RNA small subunit methyltransferase H (373 aa).

S-adenosyl-L-methionine contacts are provided by residues 92 to 94 (GGH), D111, Y138, D159, and Q166. 2 stretches are compositionally biased toward basic and acidic residues: residues 343 to 355 (AERADEQEIERNP) and 363 to 373 (RALEKVGGRGS). A disordered region spans residues 343–373 (AERADEQEIERNPRSAPVRLRALEKVGGRGS).

The protein belongs to the methyltransferase superfamily. RsmH family.

It localises to the cytoplasm. The catalysed reaction is cytidine(1402) in 16S rRNA + S-adenosyl-L-methionine = N(4)-methylcytidine(1402) in 16S rRNA + S-adenosyl-L-homocysteine + H(+). Specifically methylates the N4 position of cytidine in position 1402 (C1402) of 16S rRNA. The polypeptide is Ribosomal RNA small subunit methyltransferase H (Mycolicibacterium smegmatis (strain ATCC 700084 / mc(2)155) (Mycobacterium smegmatis)).